Consider the following 191-residue polypeptide: Large ribosomal subunit protein bL9c (191 aa).

The N-terminal 35 residues, 1-35 (MASPSCASTLPWTAAAFSYPRRLQTRRAPSLVIVA), are a transit peptide targeting the chloroplast.

It belongs to the bacterial ribosomal protein bL9 family. As to quaternary structure, part of the 50S ribosomal subunit.

Its subcellular location is the plastid. It is found in the chloroplast. Binds to the 23S rRNA. The sequence is that of Large ribosomal subunit protein bL9c (RPL9) from Triticum aestivum (Wheat).